The chain runs to 190 residues: Potassium-transporting ATPase KdpC subunit (190 aa).

A helical transmembrane segment spans residues leucine 11–alanine 31.

This sequence belongs to the KdpC family. As to quaternary structure, the system is composed of three essential subunits: KdpA, KdpB and KdpC.

It localises to the cell inner membrane. Its function is as follows. Part of the high-affinity ATP-driven potassium transport (or Kdp) system, which catalyzes the hydrolysis of ATP coupled with the electrogenic transport of potassium into the cytoplasm. This subunit acts as a catalytic chaperone that increases the ATP-binding affinity of the ATP-hydrolyzing subunit KdpB by the formation of a transient KdpB/KdpC/ATP ternary complex. This is Potassium-transporting ATPase KdpC subunit from Pseudomonas savastanoi pv. phaseolicola (strain 1448A / Race 6) (Pseudomonas syringae pv. phaseolicola (strain 1448A / Race 6)).